Consider the following 662-residue polypeptide: MDPKERIKELREKINYHNYRYYVLDQPEISDYEYDMLMRELIELEEKYPELKTPDSPSQRVGGEPLKEFEPFTHVVPMLSLANAFSEGELRDFDRRVREAVGDVEYVVELKIDGLSVELIYEKGIFTVGSTRGDGIVGENVTQNLKTIKSIPLRLKDDVSLVVRGEVFMPRASFEKLNEEREKLGESLFANPRNAAAGSLRQLDPKVTAKRDLDIFIFNLQKIEGRKFKTHIETLEFLNEQGFKIIPIHKKCSNIDEVIKEIEEIRNLRDKLPYDIDGAVVKVNDLEKREILGQTAKDPRWAIAFKYPAERKKTKVLDIIVQVGRTGALTPTAILEPVAISGSVVSRATLHNEDYIKEKDIRIGDTVIVQKAGEIIPEVVEVVKEERTGQEREFVMPDRCPECGALAVRLLGEAIRRCTGLNCPAQLLRGIIHFASKDAMDIEGLGPAIINQLLSKGLIHNIADLYYLKYEDLIQLERMGDKSVKNLLNAIEESKTRDLDRLLFGLGINLIGSKAAQVIAEHFKTMDNIMKAKFEDFTQLPDIGPKMARSIVSFFAEKQNVEIIEKLKNAGVNMKKLSKGKVSNIFEGKTFVLTGALESYTREEATRMIEERGGKVTNSVSKKTDYVLVGKDPGSKLKKAQELGIKIIDEKQFEEMLKGENI.

Residues 31 to 35 (DYEYD), 80 to 81 (SL), and Glu109 contribute to the NAD(+) site. Lys111 (N6-AMP-lysine intermediate) is an active-site residue. NAD(+)-binding residues include Arg132, Glu166, Lys282, and Lys306. Residues Cys400, Cys403, Cys418, and Cys423 each coordinate Zn(2+). The BRCT domain maps to 581 to 662 (KVSNIFEGKT…FEEMLKGENI (82 aa)).

This sequence belongs to the NAD-dependent DNA ligase family. LigA subfamily. Mg(2+) is required as a cofactor. It depends on Mn(2+) as a cofactor.

The enzyme catalyses NAD(+) + (deoxyribonucleotide)n-3'-hydroxyl + 5'-phospho-(deoxyribonucleotide)m = (deoxyribonucleotide)n+m + AMP + beta-nicotinamide D-nucleotide.. In terms of biological role, DNA ligase that catalyzes the formation of phosphodiester linkages between 5'-phosphoryl and 3'-hydroxyl groups in double-stranded DNA using NAD as a coenzyme and as the energy source for the reaction. It is essential for DNA replication and repair of damaged DNA. The sequence is that of DNA ligase from Thermoanaerobacter sp. (strain X514).